We begin with the raw amino-acid sequence, 114 residues long: Transmembrane protein 256 (114 aa).

Positions 1-25 (MNAASLVQRVAGISGALAVAAGAYG) are cleaved as a signal peptide. Residues 26–64 (AHGFRRSEASDYQRELFDTANKYHFYHSLALLGAARCRK) are Extracellular-facing. The chain crosses the membrane as a helical span at residues 65–85 (PALAGVILLTGMGCFCGPLYH). The Cytoplasmic segment spans residues 86–93 (QPLTNDPS). Residues 94–114 (FSKLAPIGGSLLIVGWAAMAL) form a helical membrane-spanning segment.

This sequence belongs to the TMEM256 family.

It is found in the membrane. The polypeptide is Transmembrane protein 256 (tmem256) (Danio rerio (Zebrafish)).